A 279-amino-acid polypeptide reads, in one-letter code: Acetylglutamate kinase (279 aa).

Substrate-binding positions include 64–65 (GG), Arg86, and Asn177.

It belongs to the acetylglutamate kinase family. ArgB subfamily.

Its subcellular location is the cytoplasm. It catalyses the reaction N-acetyl-L-glutamate + ATP = N-acetyl-L-glutamyl 5-phosphate + ADP. The protein operates within amino-acid biosynthesis; L-arginine biosynthesis; N(2)-acetyl-L-ornithine from L-glutamate: step 2/4. Catalyzes the ATP-dependent phosphorylation of N-acetyl-L-glutamate. In Campylobacter jejuni subsp. doylei (strain ATCC BAA-1458 / RM4099 / 269.97), this protein is Acetylglutamate kinase.